Consider the following 76-residue polypeptide: MLKNLAKLDQTEMDKVNVDLAAAGVAFKERYNMPVIAEAVEREQPEHLRSWFRERLIAHRLASVNLSRLPYEPKLK.

In terms of assembly, the DNA polymerase holoenzyme is a complex that contains 10 different types of subunits. These subunits are organized into 3 functionally essential subassemblies: the pol III core, the beta sliding clamp processivity factor and the clamp-loading complex. The pol III core (subunits alpha,epsilon and theta) contains the polymerase and the 3'-5' exonuclease proofreading activities. The polymerase is tethered to the template via the sliding clamp processivity factor. The clamp-loading complex assembles the beta processivity factor onto the primer template and plays a central role in the organization and communication at the replication fork. This complex contains delta, delta', psi and chi, and copies of either or both of two different DnaX proteins, gamma and tau. The composition of the holoenzyme is, therefore: (alpha,epsilon,theta)[2]-(gamma/tau)[3]-delta,delta', psi,chi-beta[4].

The enzyme catalyses DNA(n) + a 2'-deoxyribonucleoside 5'-triphosphate = DNA(n+1) + diphosphate. DNA polymerase III is a complex, multichain enzyme responsible for most of the replicative synthesis in bacteria. This DNA polymerase also exhibits 3' to 5' exonuclease activity. Functionally, the exact function of the theta subunit is unknown. The sequence is that of DNA polymerase III subunit theta (holE) from Escherichia coli O157:H7.